Here is a 386-residue protein sequence, read N- to C-terminus: Putative membrane-bound transacylase BcsY (386 aa).

10 helical membrane passes run 37 to 57, 91 to 111, 118 to 138, 156 to 176, 181 to 201, 237 to 257, 258 to 278, 290 to 310, 322 to 342, and 362 to 382; these read LAIALVVLFHAGWLKGGFIGV, LLPALLCMVALVSAGMLWWVL, IALNGAYALVYLSNIWASGHV, LSLEMQFYAIIFIMALLLPLT, LVLSAIFSASAAYCAYAWHTG, AVYAAAVAVIVGAGLFYPLSY, ACPSWMTVFPCGAVVLIIMLP, LSPLGVISYSVYLWHWPGIVV, AMMAGVLALVMVVSLLSYVLV, and AALLVAACLGLAAVLAYISHV.

It belongs to the acyltransferase 3 family.

Its subcellular location is the cell inner membrane. It participates in glycan metabolism; bacterial cellulose biosynthesis. In terms of biological role, may acylate a glucose moiety into cellulose fibrils, in cooperation with BcsABII and BcsCII. The polypeptide is Putative membrane-bound transacylase BcsY (bcsY) (Komagataeibacter xylinus (Gluconacetobacter xylinus)).